Reading from the N-terminus, the 113-residue chain is Hydrogenase maturation factor HybF (113 aa).

Positions 2 and 3 each coordinate Ni(2+). Residues Cys73, Cys76, Cys89, and Cys92 each contribute to the Zn(2+) site.

The protein belongs to the HypA/HybF family. HybF subfamily.

Functionally, involved in the maturation of [NiFe] hydrogenases. Required for nickel insertion into the metal center of the hydrogenase. This Klebsiella pneumoniae protein is Hydrogenase maturation factor HybF.